We begin with the raw amino-acid sequence, 769 residues long: Endothelin-converting enzyme 1 (769 aa).

Over 1 to 67 (MRTVWSPLAA…WAARTSVEKR (67 aa)) the chain is Cytoplasmic. T24 is subject to Phosphothreonine. The helical; Signal-anchor for type II membrane protein transmembrane segment at 68–88 (LVVLVTLLAAGLVACLAALGI) threads the bilayer. The Extracellular portion of the chain corresponds to 89 to 769 (QYQTRTPPVC…MNPHHKCEVW (681 aa)). Positions 97–769 (VCLTEACVSV…MNPHHKCEVW (673 aa)) constitute a Peptidase M13 domain. Disulfide bonds link C98–C103, C121–C754, C129–C714, C184–C434, and C643–C766. Residues N165, N186, N209, N269, N315, N361, N382, and N538 are each glycosylated (N-linked (GlcNAc...) asparagine). Position 606 (H606) interacts with Zn(2+). E607 is a catalytic residue. H610 contacts Zn(2+). N631 and N650 each carry an N-linked (GlcNAc...) asparagine glycan. E666 is a Zn(2+) binding site. D670 functions as the Proton donor in the catalytic mechanism.

It belongs to the peptidase M13 family. In terms of assembly, homodimer; disulfide-linked. Interacts with PPP1R16B. Interacts with TSPAN8; this interaction recruits the endothelin converting enzyme ECE1 to tetraspanin-enriched microdomains and positively modulates its enzymatic activity. It depends on Zn(2+) as a cofactor.

The protein resides in the cell membrane. It carries out the reaction Hydrolysis of the 21-Trp-|-Val-22 bond in big endothelin to form endothelin 1.. With respect to regulation, inhibited by phosphoramidon. Functionally, converts big endothelin-1 to endothelin-1. The sequence is that of Endothelin-converting enzyme 1 (Ece1) from Mus musculus (Mouse).